A 37-amino-acid polypeptide reads, in one-letter code: Calcitonin gene-related peptide (37 aa).

C2 and C7 are oxidised to a cystine. F37 bears the Phenylalanine amide mark.

It belongs to the calcitonin family.

CGRP induces vasodilation. It dilates a variety of vessels including the coronary, cerebral and systemic vasculature. Its abundance in the CNS also points toward a neurotransmitter or neuromodulator role. This Pelophylax ridibundus (Marsh frog) protein is Calcitonin gene-related peptide.